The following is a 1077-amino-acid chain: Ubiquitin-activating enzyme E1 2 (1077 aa).

Positions 16–36 (SPMKKRRIDHTESADGSAINA) are disordered. ATP contacts are provided by residues A499, D525, R536, K549, and 597–598 (DN). C653 serves as the catalytic Glycyl thioester intermediate.

The protein belongs to the ubiquitin-activating E1 family. Monomer. Expressed in leaves, flowers, roots and stems. Detected in germinating seeds, cotyledons, hypocotyls, vascular tissues, anthers, filaments, pollen, style, stigma, sepals, petals, ovary, developing ovules, funiculi and silique walls.

The enzyme catalyses ATP + ubiquitin + [E1 ubiquitin-activating enzyme]-L-cysteine = AMP + diphosphate + S-ubiquitinyl-[E1 ubiquitin-activating enzyme]-L-cysteine.. The protein operates within protein modification; protein ubiquitination. Its function is as follows. Activates ubiquitin by first adenylating its C-terminal glycine residue with ATP, and thereafter linking this residue to the side chain of a cysteine residue in E1, yielding a ubiquitin-E1 thioester and free AMP. This Arabidopsis thaliana (Mouse-ear cress) protein is Ubiquitin-activating enzyme E1 2 (UBA2).